A 273-amino-acid chain; its full sequence is 4-hydroxy-tetrahydrodipicolinate reductase (273 aa).

NAD(+)-binding positions include Gly-11–Met-16 and Glu-36. Arg-37 provides a ligand contact to NADP(+). NAD(+)-binding positions include Gly-100–Thr-102 and Ala-124–Tyr-127. His-157 serves as the catalytic Proton donor/acceptor. His-158 contacts (S)-2,3,4,5-tetrahydrodipicolinate. Lys-161 serves as the catalytic Proton donor. Residue Gly-167–Thr-168 participates in (S)-2,3,4,5-tetrahydrodipicolinate binding.

The protein belongs to the DapB family.

It localises to the cytoplasm. The catalysed reaction is (S)-2,3,4,5-tetrahydrodipicolinate + NAD(+) + H2O = (2S,4S)-4-hydroxy-2,3,4,5-tetrahydrodipicolinate + NADH + H(+). The enzyme catalyses (S)-2,3,4,5-tetrahydrodipicolinate + NADP(+) + H2O = (2S,4S)-4-hydroxy-2,3,4,5-tetrahydrodipicolinate + NADPH + H(+). Its pathway is amino-acid biosynthesis; L-lysine biosynthesis via DAP pathway; (S)-tetrahydrodipicolinate from L-aspartate: step 4/4. Its function is as follows. Catalyzes the conversion of 4-hydroxy-tetrahydrodipicolinate (HTPA) to tetrahydrodipicolinate. This is 4-hydroxy-tetrahydrodipicolinate reductase from Acinetobacter baumannii (strain ACICU).